A 545-amino-acid chain; its full sequence is CTP synthase (545 aa).

Positions 1–266 are amidoligase domain; it reads MTTNYIFVTG…DDYICKRFSL (266 aa). Residue serine 14 participates in CTP binding. Serine 14 serves as a coordination point for UTP. ATP-binding positions include 15 to 20 and aspartate 72; that span reads SLGKGI. Mg(2+)-binding residues include aspartate 72 and glutamate 140. Residues 147–149, 187–192, and lysine 223 each bind CTP; these read DIE and KTKPTQ. Residues 187–192 and lysine 223 each bind UTP; that span reads KTKPTQ. 239 to 241 lines the ATP pocket; sequence KDV. The Glutamine amidotransferase type-1 domain occupies 291 to 542; that stretch reads TIGMVGKYIE…VKAASEFQKR (252 aa). Glycine 352 is a binding site for L-glutamine. Cysteine 379 functions as the Nucleophile; for glutamine hydrolysis in the catalytic mechanism. L-glutamine contacts are provided by residues 380–383, glutamate 403, and arginine 470; that span reads LGMQ. Active-site residues include histidine 515 and glutamate 517.

It belongs to the CTP synthase family. In terms of assembly, homotetramer.

The catalysed reaction is UTP + L-glutamine + ATP + H2O = CTP + L-glutamate + ADP + phosphate + 2 H(+). It carries out the reaction L-glutamine + H2O = L-glutamate + NH4(+). The enzyme catalyses UTP + NH4(+) + ATP = CTP + ADP + phosphate + 2 H(+). The protein operates within pyrimidine metabolism; CTP biosynthesis via de novo pathway; CTP from UDP: step 2/2. With respect to regulation, allosterically activated by GTP, when glutamine is the substrate; GTP has no effect on the reaction when ammonia is the substrate. The allosteric effector GTP functions by stabilizing the protein conformation that binds the tetrahedral intermediate(s) formed during glutamine hydrolysis. Inhibited by the product CTP, via allosteric rather than competitive inhibition. In terms of biological role, catalyzes the ATP-dependent amination of UTP to CTP with either L-glutamine or ammonia as the source of nitrogen. Regulates intracellular CTP levels through interactions with the four ribonucleotide triphosphates. The polypeptide is CTP synthase (Shigella boydii serotype 18 (strain CDC 3083-94 / BS512)).